A 141-amino-acid chain; its full sequence is Putative pre-16S rRNA nuclease (141 aa).

It belongs to the YqgF nuclease family.

It localises to the cytoplasm. Could be a nuclease involved in processing of the 5'-end of pre-16S rRNA. The chain is Putative pre-16S rRNA nuclease from Coxiella burnetii (strain CbuG_Q212) (Coxiella burnetii (strain Q212)).